Reading from the N-terminus, the 445-residue chain is Acyl-CoA Delta-4 desaturase (445 aa).

The 78-residue stretch at 19 to 96 folds into the Cytochrome b5 heme-binding domain; the sequence is AGVYTWEEVQ…MKPLLVGELA (78 aa). 4 helical membrane passes run 132–152, 153–173, 266–286, and 307–327; these read LFFL…LLMV, WHWG…ATAQ, YFFL…NIMM, and YMLC…MMFA.

Belongs to the fatty acid desaturase type 1 family.

It is found in the membrane. The catalysed reaction is (8Z,11Z,14Z,17Z)-eicosatetraenoyl-CoA + 2 Fe(II)-[cytochrome b5] + O2 + 2 H(+) = (5Z,8Z,11Z,14Z,17Z)-eicosapentaenoyl-CoA + 2 Fe(III)-[cytochrome b5] + 2 H2O. It carries out the reaction (7Z,10Z,13Z,16Z)-docosatetraenoyl-CoA + 2 Fe(II)-[cytochrome b5] + O2 + 2 H(+) = (4Z,7Z,10Z,13Z,16Z)-docosapentaenoyl-CoA + 2 Fe(III)-[cytochrome b5] + 2 H2O. It catalyses the reaction (7Z,10Z,13Z,16Z,19Z)-docosapentaenoyl-CoA + 2 Fe(II)-[cytochrome b5] + O2 + 2 H(+) = (4Z,7Z,10Z,13Z,16Z,19Z)-docosahexaenoyl-CoA + 2 Fe(III)-[cytochrome b5] + 2 H2O. It functions in the pathway lipid metabolism; polyunsaturated fatty acid biosynthesis. Fatty acid desaturase with bifunctional delta-4 and delta-5 activities. Component of a lipid metabolic pathway that catalyzes the biosynthesis of polyunsaturated fatty acids (PUFA) with preference toward n-3 substrates and Delta(4)function. The chain is Acyl-CoA Delta-4 desaturase from Siganus canaliculatus (White-spotted spinefoot).